A 114-amino-acid polypeptide reads, in one-letter code: uncharacterized protein (114 aa).

Positions 13-99 constitute an ABM domain; it reads YYAVIFSSVK…VWYESYAVRV (87 aa).

This is an uncharacterized protein from Bacillus subtilis (strain 168).